The chain runs to 121 residues: Ribosome-binding factor A (121 aa).

The protein belongs to the RbfA family. As to quaternary structure, monomer. Binds 30S ribosomal subunits, but not 50S ribosomal subunits or 70S ribosomes.

Its subcellular location is the cytoplasm. In terms of biological role, one of several proteins that assist in the late maturation steps of the functional core of the 30S ribosomal subunit. Associates with free 30S ribosomal subunits (but not with 30S subunits that are part of 70S ribosomes or polysomes). Required for efficient processing of 16S rRNA. May interact with the 5'-terminal helix region of 16S rRNA. The polypeptide is Ribosome-binding factor A (Hydrogenovibrio crunogenus (strain DSM 25203 / XCL-2) (Thiomicrospira crunogena)).